We begin with the raw amino-acid sequence, 301 residues long: 4-diphosphocytidyl-2-C-methyl-D-erythritol kinase (301 aa).

Lys18 is an active-site residue. 103–113 lines the ATP pocket; it reads PVAAGIGGGSA. Asp145 is a catalytic residue.

Belongs to the GHMP kinase family. IspE subfamily.

It carries out the reaction 4-CDP-2-C-methyl-D-erythritol + ATP = 4-CDP-2-C-methyl-D-erythritol 2-phosphate + ADP + H(+). Its pathway is isoprenoid biosynthesis; isopentenyl diphosphate biosynthesis via DXP pathway; isopentenyl diphosphate from 1-deoxy-D-xylulose 5-phosphate: step 3/6. Its function is as follows. Catalyzes the phosphorylation of the position 2 hydroxy group of 4-diphosphocytidyl-2C-methyl-D-erythritol. In Bradyrhizobium sp. (strain BTAi1 / ATCC BAA-1182), this protein is 4-diphosphocytidyl-2-C-methyl-D-erythritol kinase.